Here is a 472-residue protein sequence, read N- to C-terminus: Protein c-ets-2-B (472 aa).

Positions 85–170 constitute a PNT domain; it reads DTFNGFAKER…EHLEEMMKEY (86 aa). Residues 366–446 constitute a DNA-binding region (ETS); sequence IQLWQFLLEL…SGKRYVYRFV (81 aa).

Belongs to the ETS family.

Its subcellular location is the nucleus. In terms of biological role, probable transcription factor. The chain is Protein c-ets-2-B (ets2-b) from Xenopus laevis (African clawed frog).